The sequence spans 30 residues: Large ribosomal subunit protein bL25 (30 aa).

Belongs to the bacterial ribosomal protein bL25 family. As to quaternary structure, part of the 50S ribosomal subunit; part of the 5S rRNA/L5/L18/L25 subcomplex. Contacts the 5S rRNA. Binds to the 5S rRNA independently of L5 and L18.

This is one of the proteins that binds to the 5S RNA in the ribosome where it forms part of the central protuberance. This is Large ribosomal subunit protein bL25 (rplY) from Anabaena variabilis.